The primary structure comprises 346 residues: Cell shape-determining protein MreC (346 aa).

Positions 89–118 form a coiled coil; sequence NRRLKAELAEMRQWRDRALALQDQNDRFKS. The disordered stretch occupies residues 292-346; that stretch reads SLPPVTTEDPQTSILSNPVSRPVAPTPSPATATPSAAPAARPATTATPPQTGAPR. The span at 299–308 shows a compositional bias: polar residues; it reads EDPQTSILSN. Positions 309–340 are enriched in low complexity; it reads PVSRPVAPTPSPATATPSAAPAARPATTATPP.

It belongs to the MreC family. Interacts with penicillin-binding proteins (PBP2, PBP1a, PBP1b, PBP2a and PBP2b). Interacts with outer membrane proteins belonging to the TonB-dependent receptor family of transport proteins.

It localises to the periplasm. Functionally, involved in formation and maintenance of cell shape. Required for the spatial organization of components of the peptidoglycan-synthesizing holoenzyme in the periplasm and peptidoglycan synthetic activity. This Caulobacter vibrioides (strain NA1000 / CB15N) (Caulobacter crescentus) protein is Cell shape-determining protein MreC.